The primary structure comprises 249 residues: Large ribosomal subunit protein uL30A (249 aa).

It belongs to the universal ribosomal protein uL30 family. In terms of assembly, component of the small ribosomal subunit (SSU). Mature yeast ribosomes consist of a small (40S) and a large (60S) subunit. The 40S small subunit contains 1 molecule of ribosomal RNA (18S rRNA) and at least 33 different proteins. The large 60S subunit contains 3 rRNA molecules (25S, 5.8S and 5S rRNA) and at least 46 different proteins.

The protein resides in the cytoplasm. It is found in the nucleus. It localises to the nucleolus. Functionally, component of the ribosome, a large ribonucleoprotein complex responsible for the synthesis of proteins in the cell. The small ribosomal subunit (SSU) binds messenger RNAs (mRNAs) and translates the encoded message by selecting cognate aminoacyl-transfer RNA (tRNA) molecules. The large subunit (LSU) contains the ribosomal catalytic site termed the peptidyl transferase center (PTC), which catalyzes the formation of peptide bonds, thereby polymerizing the amino acids delivered by tRNAs into a polypeptide chain. The nascent polypeptides leave the ribosome through a tunnel in the LSU and interact with protein factors that function in enzymatic processing, targeting, and the membrane insertion of nascent chains at the exit of the ribosomal tunnel. This chain is Large ribosomal subunit protein uL30A (rlp7), found in Schizosaccharomyces pombe (strain 972 / ATCC 24843) (Fission yeast).